The following is a 1637-amino-acid chain: Kinesin-like protein KIF21B (1637 aa).

Residues 8 to 370 form the Kinesin motor domain; that stretch reads CVKVAVRIRP…LKYANRARNI (363 aa). Position 87–94 (87–94) interacts with ATP; that stretch reads GQTGAGKT. 2 coiled-coil regions span residues 376 to 604 and 631 to 824; these read VNQD…EEEG and NFQA…ALRR. Residues 400-1099 are interaction with TRIM3; the sequence is MEYKAGKRVI…LQALIYNVQQ (700 aa). The span at 509–533 shows a compositional bias: low complexity; the sequence is ASARSPYSLGASPAAPAFGGSPASS. Disordered stretches follow at residues 509–538 and 552–628; these read ASARSPYSLGASPAAPAFGGSPASSMEDAS and KKKE…PEEK. The segment covering 578–627 has biased composition (acidic residues); it reads NSEETDENEAEEEEEERDESGCEEEEGREDEDEDSGSEESLVDSDSDPEE. Ser579 carries the phosphoserine modification. Thr582 is modified (phosphothreonine). Disordered stretches follow at residues 830-865 and 880-906; these read SERVAGRAGLKPPMLDSGAEVSASTTSSEAESGARS and FLGDHPAPTVNGTRPARKKFQKKGASQ. The span at 846–865 shows a compositional bias: low complexity; it reads SGAEVSASTTSSEAESGARS. Residues 928-1016 are a coiled coil; the sequence is MQRMTIVNLE…EETKEELDST (89 aa). Phosphoserine is present on residues Ser1149, Ser1167, and Ser1215. Polar residues predominate over residues 1194-1217; sequence RTVSLPTRGSTFPRQSRATETSPL. Positions 1194-1251 are disordered; it reads RTVSLPTRGSTFPRQSRATETSPLTRRKSYDRGQPIRSTDVGFTPPSSPPTRPRNDRN. Thr1237 bears the Phosphothreonine mark. A Phosphoserine modification is found at Ser1241. 7 WD repeats span residues 1306-1343, 1346-1384, 1410-1448, 1451-1493, 1502-1539, 1543-1582, and 1585-1622; these read GHTKPILCLDATDELLFTGSKDRSCKMWNLVTGQEIAA, GHPNNVVSIKYCSHSGLVFSVSTSYIKVWDIRDSAKCIR, QGEHQINQIALSPSGTMLYAASGNAVRIWELSRFQPVGK, GHIG…TGTI, PHYDGIECLAIQGDILFSGSRDNGIKKWDLDQQELIQQ, AHKDWVCALAFIPGRPMLLSACRAGVIKVWNVDNFTPIGE, and GHDSPINAICTNAKHIFTASSDCRVKLWNYVPGLTPCL.

Belongs to the TRAFAC class myosin-kinesin ATPase superfamily. Kinesin family. In terms of assembly, interacts with TRIM3; the interaction positively affects motility of KIF21B. Interacts with GABARAP and GABA(A) receptor subunits: GABRG2, GABRA1 and GABRA2. May interact with GABA(A) receptor subunits: GABRB2 and GABRB3.

Its subcellular location is the cytoplasm. It is found in the cytoskeleton. The protein localises to the cell projection. It localises to the dendrite. The protein resides in the growth cone. Its subcellular location is the axon. It is found in the cytoplasmic vesicle. Its function is as follows. Plus-end directed microtubule-dependent motor protein which displays processive activity. Is involved in regulation of microtubule dynamics, synapse function and neuronal morphology, including dendritic tree branching and spine formation. Plays a role in lerning and memory. Involved in delivery of gamma-aminobutyric acid (GABA(A)) receptor to cell surface. This Homo sapiens (Human) protein is Kinesin-like protein KIF21B (KIF21B).